The sequence spans 122 residues: Large ribosomal subunit protein uL18 (122 aa).

The protein belongs to the universal ribosomal protein uL18 family. Part of the 50S ribosomal subunit; part of the 5S rRNA/L5/L18/L25 subcomplex. Contacts the 5S and 23S rRNAs.

Functionally, this is one of the proteins that bind and probably mediate the attachment of the 5S RNA into the large ribosomal subunit, where it forms part of the central protuberance. The protein is Large ribosomal subunit protein uL18 of Leptospira borgpetersenii serovar Hardjo-bovis (strain JB197).